A 114-amino-acid chain; its full sequence is Small ribosomal subunit protein bS6 (114 aa).

The protein belongs to the bacterial ribosomal protein bS6 family.

In terms of biological role, binds together with bS18 to 16S ribosomal RNA. The sequence is that of Small ribosomal subunit protein bS6 from Phocaeicola vulgatus (strain ATCC 8482 / DSM 1447 / JCM 5826 / CCUG 4940 / NBRC 14291 / NCTC 11154) (Bacteroides vulgatus).